Consider the following 360-residue polypeptide: DNA replication and repair protein RecF (360 aa).

Residue 33–40 (GENGSGKT) coordinates ATP.

Belongs to the RecF family.

The protein localises to the cytoplasm. Functionally, the RecF protein is involved in DNA metabolism; it is required for DNA replication and normal SOS inducibility. RecF binds preferentially to single-stranded, linear DNA. It also seems to bind ATP. The polypeptide is DNA replication and repair protein RecF (Rickettsia peacockii (strain Rustic)).